The sequence spans 211 residues: Protein-L-isoaspartate O-methyltransferase (211 aa).

S62 is a catalytic residue.

This sequence belongs to the methyltransferase superfamily. L-isoaspartyl/D-aspartyl protein methyltransferase family.

Its subcellular location is the cytoplasm. It catalyses the reaction [protein]-L-isoaspartate + S-adenosyl-L-methionine = [protein]-L-isoaspartate alpha-methyl ester + S-adenosyl-L-homocysteine. Its function is as follows. Catalyzes the methyl esterification of L-isoaspartyl residues in peptides and proteins that result from spontaneous decomposition of normal L-aspartyl and L-asparaginyl residues. It plays a role in the repair and/or degradation of damaged proteins. In Shewanella sp. (strain MR-4), this protein is Protein-L-isoaspartate O-methyltransferase.